Here is a 426-residue protein sequence, read N- to C-terminus: Serine--tRNA ligase (426 aa).

Position 230–232 (230–232 (TAE)) interacts with L-serine. 261–263 (RSE) is a binding site for ATP. Glutamate 284 is an L-serine binding site. ATP is bound at residue 348 to 351 (EISS). L-serine is bound at residue serine 384.

It belongs to the class-II aminoacyl-tRNA synthetase family. Type-1 seryl-tRNA synthetase subfamily. Homodimer. The tRNA molecule binds across the dimer.

It localises to the cytoplasm. It carries out the reaction tRNA(Ser) + L-serine + ATP = L-seryl-tRNA(Ser) + AMP + diphosphate + H(+). The enzyme catalyses tRNA(Sec) + L-serine + ATP = L-seryl-tRNA(Sec) + AMP + diphosphate + H(+). It functions in the pathway aminoacyl-tRNA biosynthesis; selenocysteinyl-tRNA(Sec) biosynthesis; L-seryl-tRNA(Sec) from L-serine and tRNA(Sec): step 1/1. Catalyzes the attachment of serine to tRNA(Ser). Is also able to aminoacylate tRNA(Sec) with serine, to form the misacylated tRNA L-seryl-tRNA(Sec), which will be further converted into selenocysteinyl-tRNA(Sec). This chain is Serine--tRNA ligase, found in Phenylobacterium zucineum (strain HLK1).